The following is a 435-amino-acid chain: Adenylosuccinate synthetase (435 aa).

GTP contacts are provided by residues 17 to 23 (GDEGKGK) and 45 to 47 (GHT). The active-site Proton acceptor is aspartate 18. 2 residues coordinate Mg(2+): aspartate 18 and glycine 45. IMP is bound by residues 18–21 (DEGK), 43–46 (NAGH), threonine 134, arginine 148, glutamine 229, threonine 244, and arginine 308. Histidine 46 functions as the Proton donor in the catalytic mechanism. Position 304–310 (304–310 (SVTGRPR)) interacts with substrate. GTP is bound by residues arginine 310, 336 to 338 (KLD), and 418 to 420 (STG).

It belongs to the adenylosuccinate synthetase family. Homodimer. Mg(2+) is required as a cofactor.

It localises to the cytoplasm. It catalyses the reaction IMP + L-aspartate + GTP = N(6)-(1,2-dicarboxyethyl)-AMP + GDP + phosphate + 2 H(+). The protein operates within purine metabolism; AMP biosynthesis via de novo pathway; AMP from IMP: step 1/2. Its function is as follows. Plays an important role in the de novo pathway of purine nucleotide biosynthesis. Catalyzes the first committed step in the biosynthesis of AMP from IMP. This chain is Adenylosuccinate synthetase, found in Bordetella pertussis (strain Tohama I / ATCC BAA-589 / NCTC 13251).